The chain runs to 216 residues: Redox-sensing transcriptional repressor Rex (216 aa).

A DNA-binding region (H-T-H motif) is located at residues 20 to 59 (QYYRLFKSLVEENVTRTNSQLISEKIGVDAATIRRDFSLF). An NAD(+)-binding site is contributed by 94 to 99 (GVGNLG).

The protein belongs to the transcriptional regulatory Rex family. Homodimer.

It is found in the cytoplasm. Functionally, modulates transcription in response to changes in cellular NADH/NAD(+) redox state. This is Redox-sensing transcriptional repressor Rex from Lactococcus lactis subsp. lactis (strain IL1403) (Streptococcus lactis).